Here is a 393-residue protein sequence, read N- to C-terminus: S-adenosylmethionine synthase (393 aa).

Residue His17 participates in ATP binding. Asp19 is a binding site for Mg(2+). Glu45 lines the K(+) pocket. L-methionine is bound by residues Glu58 and Gln106. The tract at residues 106–116 is flexible loop; that stretch reads QSAHIAQGVDA. ATP contacts are provided by residues 171-173, Asp246, 252-253, Ala269, and Lys273; these read DAK and RK. Asp246 contributes to the L-methionine binding site. Residue Lys277 participates in L-methionine binding.

This sequence belongs to the AdoMet synthase family. As to quaternary structure, homotetramer; dimer of dimers. The cofactor is Mg(2+). It depends on K(+) as a cofactor.

It localises to the cytoplasm. The catalysed reaction is L-methionine + ATP + H2O = S-adenosyl-L-methionine + phosphate + diphosphate. The protein operates within amino-acid biosynthesis; S-adenosyl-L-methionine biosynthesis; S-adenosyl-L-methionine from L-methionine: step 1/1. Catalyzes the formation of S-adenosylmethionine (AdoMet) from methionine and ATP. The overall synthetic reaction is composed of two sequential steps, AdoMet formation and the subsequent tripolyphosphate hydrolysis which occurs prior to release of AdoMet from the enzyme. This is S-adenosylmethionine synthase from Roseobacter denitrificans (strain ATCC 33942 / OCh 114) (Erythrobacter sp. (strain OCh 114)).